The chain runs to 157 residues: Cyclic pyranopterin monophosphate synthase (157 aa).

Residues 74-76 (MCH) and 112-113 (ME) each bind substrate. Asp-127 is an active-site residue.

This sequence belongs to the MoaC family. In terms of assembly, homohexamer; trimer of dimers.

The catalysed reaction is (8S)-3',8-cyclo-7,8-dihydroguanosine 5'-triphosphate = cyclic pyranopterin phosphate + diphosphate. It participates in cofactor biosynthesis; molybdopterin biosynthesis. Its function is as follows. Catalyzes the conversion of (8S)-3',8-cyclo-7,8-dihydroguanosine 5'-triphosphate to cyclic pyranopterin monophosphate (cPMP). The protein is Cyclic pyranopterin monophosphate synthase of Campylobacter jejuni (strain RM1221).